The primary structure comprises 1332 residues: Abscisic-aldehyde oxidase (1332 aa).

A 2Fe-2S ferredoxin-type domain is found at 1–88 (MDLEFAVNGE…GCSITTSEGL (88 aa)). [2Fe-2S] cluster-binding residues include Cys40, Cys45, and Cys48. One can recognise an FAD-binding PCMH-type domain in the interval 219–400 (SDHLKYRWTT…LKVEIPSWTA (182 aa)).

Belongs to the xanthine dehydrogenase family. As to quaternary structure, aldehyde oxidases (AO) are homodimers and heterodimers of AO subunits. AO-delta is a AAO3 homodimer. AAO3 also forms a dimer with AAO2. Interacts with PUB44, and this interaction probably results in targeting of this protein to the proteasome. It depends on [2Fe-2S] cluster as a cofactor. FAD serves as cofactor. Mo-molybdopterin is required as a cofactor. As to expression, expressed in vascular tissues of all organs, particularly in phloem companion cells and xylem parenchymatic cells. Highly expressed in roots and rosettes, and to lower extent in seedlings, stems and flowers. Expressed at very low levels in siliques and dry seeds. Also detected in root dividing cells (tips and primordia), in mesophyll cells and inside the guard cells.

It localises to the cytoplasm. The enzyme catalyses 2-cis-(+)-abscisic aldehyde + O2 + H2O = 2-cis-(+)-abscisate + H2O2 + H(+). It catalyses the reaction 1-naphthaldehyde + O2 + H2O = 1-naphthoate + H2O2 + H(+). The catalysed reaction is indole-3-acetaldehyde + O2 + H2O = (indol-3-yl)acetate + H2O2 + H(+). In terms of biological role, in higher plants aldehyde oxidases (AO) appear to be homo- and heterodimeric assemblies of AO subunits with probably different physiological functions. AO-delta may be involved in the last step of abscisic acid biosynthesis, at least in leaves and seeds. In vitro, AO-delta oxidizes abscisic aldehyde to abscisic acid (ABA). In vitro, AO-delta also uses 1-naphthaldehyde, indole-3-aldehyde (IAld), benzaldehyde and cinnamaldehyde as substrate; the AAO2-AAO3 dimer also uses abscisic aldehyde as substrate. The polypeptide is Abscisic-aldehyde oxidase (AAO3) (Arabidopsis thaliana (Mouse-ear cress)).